The sequence spans 194 residues: MWLLALVVAYLIGSIPTAYVVGRYLYGFDIRRRGSGNVGATNTLRTMGTIPGLVVLGVDALKGVLAVLLGQALGGPVLVILAALMAIVGHNWSIFLEFQGGRGVATTAGALLAMAPLALFWAFLIWLAVVIFSRYISLGSIVAAAVAPFLVIYFHRPWPYVLFTFVAAALVIYRHRPNIKRLLAGTEHKLGERS.

Helical transmembrane passes span 1–21 (MWLL…AYVV), 64–84 (VLAV…LAAL), 112–132 (LAMA…VVIF), 135–155 (YISL…IYFH), and 156–173 (RPWP…LVIY).

Belongs to the PlsY family. As to quaternary structure, probably interacts with PlsX.

It is found in the cell membrane. The enzyme catalyses an acyl phosphate + sn-glycerol 3-phosphate = a 1-acyl-sn-glycero-3-phosphate + phosphate. It functions in the pathway lipid metabolism; phospholipid metabolism. Functionally, catalyzes the transfer of an acyl group from acyl-phosphate (acyl-PO(4)) to glycerol-3-phosphate (G3P) to form lysophosphatidic acid (LPA). This enzyme utilizes acyl-phosphate as fatty acyl donor, but not acyl-CoA or acyl-ACP. This chain is Glycerol-3-phosphate acyltransferase 2, found in Moorella thermoacetica (strain ATCC 39073 / JCM 9320).